A 587-amino-acid polypeptide reads, in one-letter code: Prolycopene isomerase 1, chloroplastic (587 aa).

Residues 1–13 (MLCLSLNSSSTSP) show a composition bias toward low complexity. The interval 1–21 (MLCLSLNSSSTSPPKSPLHHS) is disordered. The N-terminal 50 residues, 1–50 (MLCLSLNSSSTSPPKSPLHHSFSRRSMRSWVCSPRVQRKKLGFWSSPKAV), are a transit peptide targeting the chloroplast.

The protein belongs to the carotenoid/retinoid oxidoreductase family. CrtISO subfamily. The cofactor is NAD(+). It depends on NADP(+) as a cofactor. Requires FAD as cofactor. As to expression, up-regulated in the flower buds and flower lip tissue, while it is weakly expressed in leaves.

It localises to the plastid. It is found in the chloroplast membrane. It carries out the reaction 7,7',9,9'-tetra-cis-lycopene = all-trans-lycopene. It functions in the pathway carotenoid biosynthesis; lycopene biosynthesis. Carotene cis-trans-isomerase that converts 7,9,9'-tri-cis-neurosporene to 9'-cis-neurosporene and 7,9,9',7'-tetra-cis-lycopene (also known as prolycopene) into all-trans-lycopene. Isomerization requires redox-active components, suggesting that isomerization is achieved by a reversible redox reaction acting at specific double bonds. Isomerizes adjacent cis-double bonds at C7 and C9 pairwise into the trans-configuration, but is incapable of isomerizing single cis-double bonds at C9 and C9'. The protein is Prolycopene isomerase 1, chloroplastic (CRTISO1) of Oncidium hybrid cultivar (Orchid).